A 378-amino-acid polypeptide reads, in one-letter code: Interleukin-3 receptor subunit alpha (378 aa).

Positions 1 to 18 (MVLLWLTLLLIALPCLLQ) are cleaved as a signal peptide. Topologically, residues 19-305 (TKEDPNPPIT…EEGANTRAWR (287 aa)) are extracellular. Residues Asn46, Asn64, Asn80, and Asn109 are each glycosylated (N-linked (GlcNAc...) asparagine). 4 disulfide bridges follow: Cys52-Cys68, Cys76-Cys195, Cys112-Cys122, and Cys151-Cys165. N-linked (GlcNAc...) asparagine glycans are attached at residues Asn212 and Asn218. A disulfide bridge connects residues Cys217 and Cys293. The WSXWS motif motif lies at 282 to 286 (LSAWS). A helical transmembrane segment spans residues 306 to 325 (TSLLIALGTLLALVCVFVIC). At 326–378 (RRYLVMQRLFPRIPHMKDPIGDSFQNDKLVVWEAGKAGLEECLVTEVQVVQKT) the chain is on the cytoplasmic side. Residues 334–342 (LFPRIPHMK) carry the Box 1 motif motif.

This sequence belongs to the type I cytokine receptor family. Type 5 subfamily. As to quaternary structure, interacts with IL3. Heterodimer of an alpha and a beta subunit. The beta subunit is common to the IL3, IL5 and GM-CSF receptors. Ubiquitinated by RNFT2 in response to IL3. Ubiquitination leads ligand-induced degradation by the proteasome. Ubiquitinated by RNF128 via 'Lys-27'-linked polyubiquitination, facilitating its degradation through the lysosomal pathway.

It is found in the cell membrane. Functionally, cell surface receptor for IL3 expressed on hematopoietic progenitor cells, monocytes and B-lymphocytes that controls the production and differentiation of hematopoietic progenitor cells into lineage-restricted cells. Ligand stimulation rapidly induces hetrodimerization with IL3RB, phosphorylation and enzyme activity of effector proteins such as JAK2 and PI3K that play a role in signaling cell proliferation and differentiation. Activation of JAK2 leads to STAT5-mediated transcriptional program. In Homo sapiens (Human), this protein is Interleukin-3 receptor subunit alpha.